The chain runs to 707 residues: Elongation factor G (707 aa).

Residues 8 to 290 form the tr-type G domain; it reads ERYRNIGICA…AVIEYLPSPT (283 aa). Residues 17-24, 88-92, and 142-145 each bind GTP; these read AHVDAGKT, DTPGH, and NKMD.

This sequence belongs to the TRAFAC class translation factor GTPase superfamily. Classic translation factor GTPase family. EF-G/EF-2 subfamily.

It is found in the cytoplasm. Functionally, catalyzes the GTP-dependent ribosomal translocation step during translation elongation. During this step, the ribosome changes from the pre-translocational (PRE) to the post-translocational (POST) state as the newly formed A-site-bound peptidyl-tRNA and P-site-bound deacylated tRNA move to the P and E sites, respectively. Catalyzes the coordinated movement of the two tRNA molecules, the mRNA and conformational changes in the ribosome. The protein is Elongation factor G of Idiomarina loihiensis (strain ATCC BAA-735 / DSM 15497 / L2-TR).